The primary structure comprises 202 residues: Small ribosomal subunit protein uS4c (202 aa).

In terms of domain architecture, S4 RNA-binding spans 90-158 (MRLDNIIFRL…MKRSRDSYEK (69 aa)).

This sequence belongs to the universal ribosomal protein uS4 family. As to quaternary structure, part of the 30S ribosomal subunit. Contacts protein S5. The interaction surface between S4 and S5 is involved in control of translational fidelity.

It is found in the plastid. The protein resides in the chloroplast. Its function is as follows. One of the primary rRNA binding proteins, it binds directly to 16S rRNA where it nucleates assembly of the body of the 30S subunit. In terms of biological role, with S5 and S12 plays an important role in translational accuracy. This is Small ribosomal subunit protein uS4c (rps4) from Anthoceros angustus (Hornwort).